A 193-amino-acid chain; its full sequence is Acyl-homoserine-lactone synthase (193 aa).

This sequence belongs to the autoinducer synthase family.

The enzyme catalyses a fatty acyl-[ACP] + S-adenosyl-L-methionine = an N-acyl-L-homoserine lactone + S-methyl-5'-thioadenosine + holo-[ACP] + H(+). Functionally, required for the synthesis of OHHL (N-(3-oxohexanoyl)-L-homoserine lactone) also known as VAI or N-(beta-ketocaproyl)homoserine lactone or 3-oxo-N-(tetrahydro-2-oxo-3-furanyl)-hexanamide, an autoinducer molecule which binds to LuxR and thus acts in bioluminescence regulation. The polypeptide is Acyl-homoserine-lactone synthase (luxI) (Aliivibrio fischeri (Vibrio fischeri)).